A 104-amino-acid polypeptide reads, in one-letter code: Large ribosomal subunit protein bL21 (104 aa).

This sequence belongs to the bacterial ribosomal protein bL21 family. In terms of assembly, part of the 50S ribosomal subunit. Contacts protein L20.

This protein binds to 23S rRNA in the presence of protein L20. The protein is Large ribosomal subunit protein bL21 of Streptococcus uberis (strain ATCC BAA-854 / 0140J).